The primary structure comprises 313 residues: Ribonuclease HIII (313 aa).

One can recognise an RNase H type-2 domain in the interval 94–310 (MSVIGSDEVG…TQKAKRLVER (217 aa)). A divalent metal cation is bound by residues Asp100, Glu101, and Asp205.

It belongs to the RNase HII family. RnhC subfamily. It depends on Mn(2+) as a cofactor. Mg(2+) serves as cofactor.

The protein localises to the cytoplasm. It catalyses the reaction Endonucleolytic cleavage to 5'-phosphomonoester.. Functionally, endonuclease that specifically degrades the RNA of RNA-DNA hybrids. The sequence is that of Ribonuclease HIII from Bacillus velezensis (strain DSM 23117 / BGSC 10A6 / LMG 26770 / FZB42) (Bacillus amyloliquefaciens subsp. plantarum).